Here is a 189-residue protein sequence, read N- to C-terminus: MEKNESSAIEIAESSKERKGKAPLLAAAVGHDRAAGYKRGVSIFDLILRISAATAALAATIVMGTTEQTLPFFTQFFQFRAQYDDLPTFTFFVVGMAIVTGYLILSVPLSIVCIARPVAIGPRFLLIVCDTVTAVLATSAAGSSAAIVYLAHNGNSDANWLAICQQFNDFCQRVSGAVVAAFVAVVCSS.

Residues 1-42 are Cytoplasmic-facing; that stretch reads MEKNESSAIEIAESSKERKGKAPLLAAAVGHDRAAGYKRGVS. The helical transmembrane segment at 43–63 threads the bilayer; the sequence is IFDLILRISAATAALAATIVM. Residues 64–90 lie on the Extracellular side of the membrane; the sequence is GTTEQTLPFFTQFFQFRAQYDDLPTFT. A helical membrane pass occupies residues 91-111; sequence FFVVGMAIVTGYLILSVPLSI. Residues 112-130 lie on the Cytoplasmic side of the membrane; that stretch reads VCIARPVAIGPRFLLIVCD. A helical transmembrane segment spans residues 131–151; that stretch reads TVTAVLATSAAGSSAAIVYLA. At 152 to 189 the chain is on the extracellular side; that stretch reads HNGNSDANWLAICQQFNDFCQRVSGAVVAAFVAVVCSS.

Belongs to the Casparian strip membrane proteins (CASP) family. Homodimer and heterodimers.

Its subcellular location is the cell membrane. Its function is as follows. Regulates membrane-cell wall junctions and localized cell wall deposition. Required for establishment of the Casparian strip membrane domain (CSD) and the subsequent formation of Casparian strips, a cell wall modification of the root endodermis that determines an apoplastic barrier between the intraorganismal apoplasm and the extraorganismal apoplasm and prevents lateral diffusion. In Striga asiatica (Asiatic witchweed), this protein is Casparian strip membrane protein 1.